A 220-amino-acid chain; its full sequence is RNA polymerase sigma GP28 factor (220 aa).

In terms of biological role, sigma factors are initiation factors that promote the attachment of RNA polymerase to specific initiation sites and are then released. This sigma factor is responsible for the expression of the phage middle genes. The sequence is that of RNA polymerase sigma GP28 factor (28) from Bacillus subtilis (Bacteriophage SP01).